The following is a 178-amino-acid chain: Large ribosomal subunit protein uL6 (178 aa).

Belongs to the universal ribosomal protein uL6 family. In terms of assembly, part of the 50S ribosomal subunit.

Functionally, this protein binds to the 23S rRNA, and is important in its secondary structure. It is located near the subunit interface in the base of the L7/L12 stalk, and near the tRNA binding site of the peptidyltransferase center. The sequence is that of Large ribosomal subunit protein uL6 from Sulfurovum sp. (strain NBC37-1).